The primary structure comprises 220 residues: Adenylate kinase (220 aa).

12–17 (GAGKGT) provides a ligand contact to ATP. Residues 32-62 (STGDIFRDIVKKENDELGKKIKEIMERGELV) are NMP. AMP-binding positions include threonine 33, arginine 38, 60-62 (ELV), 88-91 (GYPR), and glutamine 95. The LID stretch occupies residues 129-166 (ARRICPKCGRIYNLISLPPKEDELCDDCKVKLVQREDD). Arginine 130 provides a ligand contact to ATP. Cysteine 133 and cysteine 136 together coordinate Zn(2+). An ATP-binding site is contributed by 139–140 (IY). Residues cysteine 153 and cysteine 156 each coordinate Zn(2+). AMP contacts are provided by arginine 163 and arginine 174. Isoleucine 202 contributes to the ATP binding site.

This sequence belongs to the adenylate kinase family. Monomer.

The protein localises to the cytoplasm. The catalysed reaction is AMP + ATP = 2 ADP. The protein operates within purine metabolism; AMP biosynthesis via salvage pathway; AMP from ADP: step 1/1. Catalyzes the reversible transfer of the terminal phosphate group between ATP and AMP. Plays an important role in cellular energy homeostasis and in adenine nucleotide metabolism. In Thermotoga petrophila (strain ATCC BAA-488 / DSM 13995 / JCM 10881 / RKU-1), this protein is Adenylate kinase.